Reading from the N-terminus, the 311-residue chain is Acetyl-coenzyme A carboxylase carboxyl transferase subunit alpha (311 aa).

A CoA carboxyltransferase C-terminal domain is found at 34 to 286 (EKDLQKEASK…KEYYLQNIRE (253 aa)).

It belongs to the AccA family. In terms of assembly, acetyl-CoA carboxylase is a heterohexamer composed of biotin carboxyl carrier protein (AccB), biotin carboxylase (AccC) and two subunits each of ACCase subunit alpha (AccA) and ACCase subunit beta (AccD).

It is found in the cytoplasm. It catalyses the reaction N(6)-carboxybiotinyl-L-lysyl-[protein] + acetyl-CoA = N(6)-biotinyl-L-lysyl-[protein] + malonyl-CoA. It functions in the pathway lipid metabolism; malonyl-CoA biosynthesis; malonyl-CoA from acetyl-CoA: step 1/1. Functionally, component of the acetyl coenzyme A carboxylase (ACC) complex. First, biotin carboxylase catalyzes the carboxylation of biotin on its carrier protein (BCCP) and then the CO(2) group is transferred by the carboxyltransferase to acetyl-CoA to form malonyl-CoA. This is Acetyl-coenzyme A carboxylase carboxyl transferase subunit alpha from Nitratiruptor sp. (strain SB155-2).